The sequence spans 520 residues: Translation initiation factor IF3-1, mitochondrial (520 aa).

A mitochondrion-targeting transit peptide spans 1-66 (MAIWRIINRS…SNIFQNLRFL (66 aa)). Basic and acidic residues predominate over residues 271–282 (ARVKEESPKPDS). A disordered region spans residues 271–520 (ARVKEESPKP…YGIFSTPKTK (250 aa)). Positions 336 to 361 (EPQSPNQHVNPQRPRFSNQAPNQQPT) are enriched in polar residues. Over residues 369–379 (PNQPPSAPRPQ) the composition is skewed to pro residues. Composition is skewed to polar residues over residues 404-422 (NQAPNQQSTGRFNPQFPNQ) and 458-468 (FQNQAPNQQPT). The segment covering 473-485 (PQPPNPPRAPPRP) has biased composition (pro residues).

The protein belongs to the IF-3 family. As to quaternary structure, monomer.

The protein localises to the mitochondrion. Functionally, IF-3 binds to the 30S ribosomal subunit and shifts the equilibrium between 70S ribosomes and their 50S and 30S subunits in favor of the free subunits, thus enhancing the availability of 30S subunits on which protein synthesis initiation begins. The sequence is that of Translation initiation factor IF3-1, mitochondrial from Arabidopsis thaliana (Mouse-ear cress).